The sequence spans 612 residues: Indole-3-acetic acid-amido synthetase GH3.5 (612 aa).

Belongs to the IAA-amido conjugating enzyme family.

Its function is as follows. Catalyzes the synthesis of indole-3-acetic acid (IAA)-amino acid conjugates, providing a mechanism for the plant to cope with the presence of excess auxin. Strongly reactive with Glu, Gln, Trp, Asp, Ala, Leu, Phe, Gly, Tyr, Met, Ile and Val. Little or no product formation with His, Ser, Thr, Arg, Lys, or Cys. Also active on pyruvic and butyric acid analogs of IAA, PAA and the synthetic auxin naphthaleneacetic acid (NAA). The two chlorinated synthetic auxin herbicides 2,4-D and 3,6-dichloro-o-anisic acid (dicamba) cannot be used as substrates. The polypeptide is Indole-3-acetic acid-amido synthetase GH3.5 (GH3.5) (Arabidopsis thaliana (Mouse-ear cress)).